A 27-amino-acid polypeptide reads, in one-letter code: Dermaseptin-S4 (27 aa).

This sequence belongs to the frog skin active peptide (FSAP) family. Dermaseptin subfamily. Monomer and oligomer. Forms aggregates in aqueous environments. As to expression, expressed by the skin glands.

The protein localises to the secreted. Functionally, potent antimicrobial peptide with activity against bacteria and protozoa. Also has activity against fungi. Also shows activity against enveloped herpes simplex virus type 1. Probably acts by disturbing membrane functions with its amphipathic structure. Binds to healthy erythrocytes (this binding is receptor independent), and has strong hemolytic activity. Does not bind to P.falciparum infected erythrocytes, but accumulates within the parasite. Kills the parasite, and only at high concentrations has a hemolytic activity on the host cell. In vitro, shows high spermicidal activities. This Phyllomedusa sauvagei (Sauvage's leaf frog) protein is Dermaseptin-S4.